The following is a 760-amino-acid chain: Probable myosin-binding protein 4 (760 aa).

The helical transmembrane segment at 26 to 46 threads the bilayer; that stretch reads WFLILLMFIDALLSYLLVWFA. Disordered stretches follow at residues 161-189, 247-273, 292-311, and 348-595; these read SRGR…SLKK, SEKR…QPVL, SMLG…VKAK, and EAEV…KHSA. Low complexity predominate over residues 352–366; sequence SGSSSPSGGEFLSPS. Residues 371–383 show a composition bias toward basic and acidic residues; that stretch reads ASREIRIQEHDDS. Residues 385–394 are compositionally biased toward polar residues; that stretch reads DFSQNITSSA. Residues 388–416 adopt a coiled-coil conformation; that stretch reads QNITSSAMEIEEFEAAIEQKESDHMDVSG. Residues 404-413 show a composition bias toward basic and acidic residues; it reads IEQKESDHMD. Acidic residues-rich tracts occupy residues 446–458 and 517–526; these read LEQE…ESEV and EEDVDNEESE. Basic and acidic residues-rich tracts occupy residues 537–550 and 562–580; these read VKEE…HGDH and SKEE…KITE. The 99-residue stretch at 611 to 709 folds into the GTD-binding domain; it reads SLVEVLKQQL…DLEMELEYYR (99 aa). The disordered stretch occupies residues 725-760; it reads GILGNTEETNVTSPTDETSIKDSTDTKLTGSPSAEN. Composition is skewed to polar residues over residues 730–741 and 750–760; these read TEETNVTSPTDE and TKLTGSPSAEN.

Its subcellular location is the endomembrane system. Functionally, membrane-anchored myosin receptors that define a distinct, plant-specific transport vesicle compartment. The chain is Probable myosin-binding protein 4 from Arabidopsis thaliana (Mouse-ear cress).